Consider the following 168-residue polypeptide: 3-hydroxyacyl-[acyl-carrier-protein] dehydratase FabZ (168 aa).

His54 is a catalytic residue.

It belongs to the thioester dehydratase family. FabZ subfamily.

It localises to the cytoplasm. The enzyme catalyses a (3R)-hydroxyacyl-[ACP] = a (2E)-enoyl-[ACP] + H2O. Functionally, involved in unsaturated fatty acids biosynthesis. Catalyzes the dehydration of short chain beta-hydroxyacyl-ACPs and long chain saturated and unsaturated beta-hydroxyacyl-ACPs. The chain is 3-hydroxyacyl-[acyl-carrier-protein] dehydratase FabZ from Yersinia enterocolitica serotype O:8 / biotype 1B (strain NCTC 13174 / 8081).